Here is a 200-residue protein sequence, read N- to C-terminus: Recombination protein RecR (200 aa).

Residues 57–72 form a C4-type zinc finger; the sequence is CRQCRTLTEDELCPQC. One can recognise a Toprim domain in the interval 80 to 175; it reads TLLCVVEGPM…ITSRIAHGVP (96 aa).

It belongs to the RecR family.

In terms of biological role, may play a role in DNA repair. It seems to be involved in an RecBC-independent recombinational process of DNA repair. It may act with RecF and RecO. This Pseudomonas fluorescens (strain ATCC BAA-477 / NRRL B-23932 / Pf-5) protein is Recombination protein RecR.